The sequence spans 427 residues: Serine--tRNA ligase (427 aa).

231–233 (TAE) is a binding site for L-serine. ATP is bound at residue 262-264 (RSE). E285 contacts L-serine. 349-352 (EISS) contributes to the ATP binding site. S385 contacts L-serine.

The protein belongs to the class-II aminoacyl-tRNA synthetase family. Type-1 seryl-tRNA synthetase subfamily. As to quaternary structure, homodimer. The tRNA molecule binds across the dimer.

Its subcellular location is the cytoplasm. The enzyme catalyses tRNA(Ser) + L-serine + ATP = L-seryl-tRNA(Ser) + AMP + diphosphate + H(+). It carries out the reaction tRNA(Sec) + L-serine + ATP = L-seryl-tRNA(Sec) + AMP + diphosphate + H(+). It participates in aminoacyl-tRNA biosynthesis; selenocysteinyl-tRNA(Sec) biosynthesis; L-seryl-tRNA(Sec) from L-serine and tRNA(Sec): step 1/1. In terms of biological role, catalyzes the attachment of serine to tRNA(Ser). Is also able to aminoacylate tRNA(Sec) with serine, to form the misacylated tRNA L-seryl-tRNA(Sec), which will be further converted into selenocysteinyl-tRNA(Sec). This is Serine--tRNA ligase from Allorhizobium ampelinum (strain ATCC BAA-846 / DSM 112012 / S4) (Agrobacterium vitis (strain S4)).